A 2897-amino-acid polypeptide reads, in one-letter code: Chromodomain-helicase-DNA-binding protein 9 (2897 aa).

Polar residues predominate over residues 173–201 (QCTSLRSQQNRNNLNPGQNSLSQSKNFMN). 3 disordered regions span residues 173–265 (QCTS…CSVS), 482–525 (QRQP…KQEK), and 537–671 (AKER…SAPL). A Glycyl lysine isopeptide (Lys-Gly) (interchain with G-Cter in SUMO2) cross-link involves residue Lys197. Low complexity predominate over residues 220–235 (SNSQQSISMQQFSQTS). 2 stretches are compositionally biased toward polar residues: residues 247 to 260 (HQEG…PNMT) and 484 to 506 (QPPS…TQVR). N6-acetyllysine is present on Lys499. Over residues 508-525 (MSEKKQRKKVESESKQEK) the composition is skewed to basic and acidic residues. Position 550 is a phosphoserine (Ser550). A compositionally biased stretch (basic and acidic residues) spans 573 to 593 (KPKDKDSKKTKTCSKLKEKTK). Residue Lys596 forms a Glycyl lysine isopeptide (Lys-Gly) (interchain with G-Cter in SUMO2) linkage. Ser611 carries the post-translational modification Phosphoserine. Residues 634-644 (RRSNRQIKRKK) are compositionally biased toward basic residues. The segment covering 645-660 (YAEDIEGKQSEEEVKG) has biased composition (basic and acidic residues). Chromo domains lie at 690-761 (AIVD…HFFA) and 773-839 (VEVD…RLDR). The LXXLL motif 1 signature appears at 868–872 (LNWLL). One can recognise a Helicase ATP-binding domain in the interval 872 to 1046 (LFNWYNRRNC…FSLLHFLEPL (175 aa)). 885–892 (DEMGLGKT) contributes to the ATP binding site. The DEAH box motif lies at 997–1000 (DEAH). Positions 1036–1040 (LFSLL) match the LXXLL motif 2 motif. The Helicase C-terminal domain maps to 1186–1337 (LIDKLLPKMK…KAVLQSMSGR (152 aa)). The tract at residues 1461 to 1484 (KDELAELSEAESEGDEKPKLRRPC) is disordered. The segment covering 1465–1474 (AELSEAESEG) has biased composition (acidic residues). Phosphoserine occurs at positions 1468 and 1472. The span at 1475–1484 (DEKPKLRRPC) shows a compositional bias: basic and acidic residues. Residues Lys1588, Lys1738, and Lys1903 each participate in a glycyl lysine isopeptide (Lys-Gly) (interchain with G-Cter in SUMO2) cross-link. Ser2026 bears the Phosphoserine mark. Positions 2031–2035 (LPRLL) match the LXXLL motif 3 motif. Lys2038 is covalently cross-linked (Glycyl lysine isopeptide (Lys-Gly) (interchain with G-Cter in SUMO2)). Disordered stretches follow at residues 2050-2238 (ENLK…QMNN) and 2305-2337 (GAAT…SKVK). Phosphoserine occurs at positions 2058 and 2059. Residue Lys2074 forms a Glycyl lysine isopeptide (Lys-Gly) (interchain with G-Cter in SUMO2) linkage. Phosphoserine is present on residues Ser2075 and Ser2079. The span at 2094–2104 (SGGKCETDRRM) shows a compositional bias: basic and acidic residues. Residues 2141 to 2193 (SSCSSRSSSSSSSSSCSHSRSGSSSSSSSSCSSASSSSSSSTSSSSSSSSSSS) show a composition bias toward low complexity. Over residues 2203–2216 (AQKRESTTHMKAYD) the composition is skewed to basic and acidic residues. The segment covering 2221-2238 (ASLSTTQDETQDSFQMNN) has biased composition (polar residues). The tract at residues 2332-2481 (QMSKVKKHVR…LSYTQPQGIP (150 aa)) is binds A/T-rich DNA. Glycyl lysine isopeptide (Lys-Gly) (interchain with G-Cter in SUMO2) cross-links involve residues Lys2350, Lys2356, and Lys2361. Residues 2429 to 2436 (KKRRGRRK) form an a.T hook-like region. The short motif at 2721 to 2725 (LPNLL) is the LXXLL motif 4 element. The segment at 2729 to 2777 (GLLTKPTESGTEDKKGSDSKESEGKTERTESQSSENGGENSVSSSPSTS) is disordered. The span at 2739–2758 (TEDKKGSDSKESEGKTERTE) shows a compositional bias: basic and acidic residues. A compositionally biased stretch (low complexity) spans 2759–2777 (SQSSENGGENSVSSSPSTS). An LXXLL motif 5 motif is present at residues 2793–2797 (LNPLL). A disordered region spans residues 2827–2897 (VQNKNSDLGS…SEDSDSSNED (71 aa)). Residues 2840–2857 (VEVKEEDSRIKDQEDKGG) show a composition bias toward basic and acidic residues. A Glycyl lysine isopeptide (Lys-Gly) (interchain with G-Cter in SUMO2) cross-link involves residue Lys2843. A compositionally biased stretch (low complexity) spans 2877-2888 (ASSGSDSTSSSS).

Belongs to the SNF2/RAD54 helicase family. In terms of assembly, interacts with PPARA. Probably interacts with ESR1 and NR1I3. Post-translationally, phosphorylated on serine and tyrosine residues. As to expression, widely expressed at low levels. In bone marrow, expression is restricted to osteoprogenitor cells adjacent to mature osteoblasts.

It is found in the cytoplasm. The protein resides in the nucleus. The enzyme catalyses ATP + H2O = ADP + phosphate + H(+). Probable ATP-dependent chromatin-remodeling factor. Acts as a transcriptional coactivator for PPARA and possibly other nuclear receptors. Has DNA-dependent ATPase activity and binds to A/T-rich DNA. Associates with A/T-rich regulatory regions in promoters of genes that participate in the differentiation of progenitors during osteogenesis. The sequence is that of Chromodomain-helicase-DNA-binding protein 9 (CHD9) from Homo sapiens (Human).